The primary structure comprises 695 residues: Centrosomal protein kizuna (695 aa).

Residues methionine 1 to leucine 12 are compositionally biased toward gly residues. The interval methionine 1–serine 24 is disordered. The segment covering alanine 15–serine 24 has biased composition (low complexity). Coiled coils occupy residues glutamate 29–lysine 57 and valine 102–aspartate 132. 4 disordered regions span residues glutamate 261 to glutamate 313, histidine 351 to threonine 391, glutamine 444 to proline 465, and serine 633 to threonine 695. Composition is skewed to polar residues over residues glycine 263–serine 274 and leucine 282–threonine 297. Composition is skewed to basic and acidic residues over residues leucine 299–glutamate 313 and aspartate 360–glutamate 377. Positions glycine 382–threonine 391 are enriched in low complexity. Threonine 391 is subject to Phosphothreonine; by PLK1. Over residues aspartate 448–proline 465 the composition is skewed to basic and acidic residues. Residues serine 633–leucine 645 are compositionally biased toward low complexity. Phosphoserine is present on residues serine 667, serine 670, and serine 672. Positions alanine 676 to proline 686 are enriched in basic and acidic residues.

Belongs to the kizuna family. Interacts with AKAP9, CEP72, ODF2, PCNT and TUBGCP2. Phosphorylation at Thr-391 by PLK1 is not needed for centrosomal localization or pericentriolar material expansion but is indispensable for spindle-pole stabilization.

The protein localises to the cytoplasm. Its subcellular location is the cytoskeleton. The protein resides in the microtubule organizing center. It is found in the centrosome. It localises to the cilium basal body. Centrosomal protein required for establishing a robust mitotic centrosome architecture that can endure the forces that converge on the centrosomes during spindle formation. Required for stabilizing the expanded pericentriolar material around the centriole. The chain is Centrosomal protein kizuna (Kiz) from Mus musculus (Mouse).